The primary structure comprises 318 residues: Olfactory receptor 13C7 (318 aa).

The Extracellular segment spans residues 1 to 27; that stretch reads MVSANQTASVTEFILLGLSAHPKLEKT. The helical transmembrane segment at 28–48 threads the bilayer; that stretch reads FFVLILLMYLVILLGNGVLIL. At 49-61 the chain is on the cytoplasmic side; that stretch reads MTVSNSHLHMPMY. A helical transmembrane segment spans residues 62-82; the sequence is FFLGNLSFLDICYTTSSVPLI. The Extracellular portion of the chain corresponds to 83 to 100; that stretch reads LDSFLTPRKTISFSACAV. Residues 101–121 form a helical membrane-spanning segment; it reads QMFLSFAMGATECVLLSMMAF. The Cytoplasmic segment spans residues 122–181; the sequence is DRYVAICNPLRYPVVMSKAAYMPKAAGSWVAGSTASMVQTSLAMRLPFCGDNIINHFTCE. The helical transmembrane segment at 182–202 threads the bilayer; sequence ILAVLKLACADISVNVISMGV. Over 203-205 the chain is Extracellular; sequence TNV. The helical transmembrane segment at 206-226 threads the bilayer; that stretch reads IFLGVPVLFISFSYVFIIATI. At 227 to 238 the chain is on the cytoplasmic side; it reads LRIPSAEGRKKA. Residues 239 to 259 traverse the membrane as a helical segment; it reads FSTCSAHLTVVVIFYGTILFM. The Extracellular portion of the chain corresponds to 260–278; that stretch reads YGKPKSKDPLGADKQDLAD. The chain crosses the membrane as a helical span at residues 279–289; sequence KLISLFYGVVT. Topologically, residues 290–318 are cytoplasmic; that stretch reads PMLNPIIYSLRNKDVKAAVRDLIFQKCFA.

This sequence belongs to the G-protein coupled receptor 1 family.

Its subcellular location is the cell membrane. Its function is as follows. Odorant receptor. The polypeptide is Olfactory receptor 13C7 (Homo sapiens (Human)).